The sequence spans 334 residues: Ribosomal RNA small subunit methyltransferase H (334 aa).

S-adenosyl-L-methionine is bound by residues glycine 34–tyrosine 36, aspartate 52, alanine 87, aspartate 100, and glutamine 107.

The protein belongs to the methyltransferase superfamily. RsmH family.

It localises to the cytoplasm. The enzyme catalyses cytidine(1402) in 16S rRNA + S-adenosyl-L-methionine = N(4)-methylcytidine(1402) in 16S rRNA + S-adenosyl-L-homocysteine + H(+). Specifically methylates the N4 position of cytidine in position 1402 (C1402) of 16S rRNA. This is Ribosomal RNA small subunit methyltransferase H from Maricaulis maris (strain MCS10) (Caulobacter maris).